We begin with the raw amino-acid sequence, 836 residues long: Eukaryotic translation initiation factor 3 subunit C (836 aa).

The interval 1–97 (MSRFFVSGYD…RRVVKSAKEK (97 aa)) is disordered. Acidic residues predominate over residues 13-55 (SSSEEEDLLTSSEEELMSSEQESDSEFDDEFANDDDSDSSDSD). Positions 86–97 (EGRRVVKSAKEK) are enriched in basic and acidic residues. Positions 586–761 (FHMHINLELL…KSINFVSSEH (176 aa)) constitute a PCI domain. Residues 783–817 (DKNEKTASNGHGRKTTQQQQQQQQKEQREQTHDEN) form a disordered region. The span at 797-806 (TTQQQQQQQQ) shows a compositional bias: low complexity. A compositionally biased stretch (basic and acidic residues) spans 807 to 817 (KEQREQTHDEN).

It belongs to the eIF-3 subunit C family. Component of the eukaryotic translation initiation factor 3 (eIF-3) complex.

The protein localises to the cytoplasm. Its function is as follows. Component of the eukaryotic translation initiation factor 3 (eIF-3) complex, which is involved in protein synthesis of a specialized repertoire of mRNAs and, together with other initiation factors, stimulates binding of mRNA and methionyl-tRNAi to the 40S ribosome. The eIF-3 complex specifically targets and initiates translation of a subset of mRNAs involved in cell proliferation. The chain is Eukaryotic translation initiation factor 3 subunit C from Meyerozyma guilliermondii (strain ATCC 6260 / CBS 566 / DSM 6381 / JCM 1539 / NBRC 10279 / NRRL Y-324) (Yeast).